A 458-amino-acid chain; its full sequence is GTPase Der (458 aa).

EngA-type G domains are found at residues 3–167 (PVVV…PETE) and 176–351 (IKLA…AQYT). Residues 9-16 (GRPNVGKS), 56-60 (DTGGF), 119-122 (NKID), 182-189 (GRPNVGKS), 229-233 (DTAGL), and 294-297 (NKWD) each bind GTP. One can recognise a KH-like domain in the interval 352-436 (FNIKTGELNN…PIRLFFREKP (85 aa)).

The protein belongs to the TRAFAC class TrmE-Era-EngA-EngB-Septin-like GTPase superfamily. EngA (Der) GTPase family. Associates with the 50S ribosomal subunit.

GTPase that plays an essential role in the late steps of ribosome biogenesis. The chain is GTPase Der from Desulfosudis oleivorans (strain DSM 6200 / JCM 39069 / Hxd3) (Desulfococcus oleovorans).